A 324-amino-acid polypeptide reads, in one-letter code: Cathepsin L-like proteinase (324 aa).

A signal peptide spans 1-16 (MKLIIALAALIVVINA). Cystine bridges form between Cys131-Cys174, Cys165-Cys206, and Cys263-Cys312. Residue Cys134 is part of the active site. Active-site residues include His270 and Asn290.

It belongs to the peptidase C1 family. As to expression, expressed in larval carcasses and gut, and adult gut.

The sequence is that of Cathepsin L-like proteinase from Phaedon cochleariae (Mustard beetle).